Consider the following 255-residue polypeptide: Hydroxyacylglutathione hydrolase (255 aa).

Histidine 56, histidine 58, aspartate 60, histidine 61, histidine 114, aspartate 133, and histidine 171 together coordinate Zn(2+).

It belongs to the metallo-beta-lactamase superfamily. Glyoxalase II family. As to quaternary structure, monomer. Requires Zn(2+) as cofactor.

It carries out the reaction an S-(2-hydroxyacyl)glutathione + H2O = a 2-hydroxy carboxylate + glutathione + H(+). It functions in the pathway secondary metabolite metabolism; methylglyoxal degradation; (R)-lactate from methylglyoxal: step 2/2. In terms of biological role, thiolesterase that catalyzes the hydrolysis of S-D-lactoyl-glutathione to form glutathione and D-lactic acid. The sequence is that of Hydroxyacylglutathione hydrolase from Bradyrhizobium sp. (strain BTAi1 / ATCC BAA-1182).